Reading from the N-terminus, the 2528-residue chain is Reducing polyketide synthase PKS1 (2528 aa).

Positions 11–436 constitute a Ketosynthase family 3 (KS3) domain; it reads ITPIAVVGMS…GANVHAILES (426 aa). Active-site for beta-ketoacyl synthase activity residues include Cys186, His321, and His359. Positions 573–868 are malonyl-CoA:ACP transacylase (MAT); it reads FVFTGQGAQW…LGGPISQVID (296 aa). Positions 954–1092 are N-terminal hotdog fold; the sequence is LDLIGVFDVH…GLISVLKSSK (139 aa). Residues 954–1278 enclose the PKS/mFAS DH domain; sequence LDLIGVFDVH…LVALDRPNSS (325 aa). Residues 956–1277 form a dehydratase (DH) domain region; that stretch reads LIGVFDVHSS…TLVALDRPNS (322 aa). The active-site Proton acceptor; for dehydratase activity is His986. Residues 1122 to 1278 form a C-terminal hotdog fold region; that stretch reads KTEWDVKDMY…LVALDRPNSS (157 aa). Asp1187 acts as the Proton donor; for dehydratase activity in catalysis. Residues 1827-2139 are enoyl reductase (ER) domain; sequence GLLDSLHFTV…TGRHMGKMVA (313 aa). The interval 2164-2341 is ketoreductase (KR) domain; sequence ASYLLVGGVG…ATVIDIGAVH (178 aa). Residues 2442–2519 enclose the Carrier domain; sequence SAVTIVLSAL…ALAVKIAARS (78 aa). O-(pantetheine 4'-phosphoryl)serine is present on Ser2479.

It participates in mycotoxin biosynthesis. Reducing polyketide synthase (PKS); part of the Tox1A locus, one of the 2 loci that mediate the biosynthesis of T-toxin, a family of linear polyketides 37 to 45 carbons in length, of which the major component is 41 carbons, and which leads to high virulence to maize. One of the PKSs (PKS1 or PKS2) could synthesize a precursor, used subsequently by the other PKS as starter unit, to add additional carbons. Variability in the length of the final carbon backbone C35-47 could be achieved by varying the number of condensation cycles, or use of different starter or extender units or might be due to decarboxylation of the penultimate product, catalyzed by DEC1. Additional proteins are required for the biosynthesis of T-toxin, including oxidoreductases RED1, RED2, RED3, LAM1 and OXI1, as well as esterase TOX9. The polypeptide is Reducing polyketide synthase PKS1 (Cochliobolus heterostrophus (strain C4 / ATCC 48331 / race T) (Southern corn leaf blight fungus)).